Here is a 540-residue protein sequence, read N- to C-terminus: Transcription termination/antitermination protein NusA (540 aa).

The S1 motif domain occupies Gly-144–Ser-214. The KH domain maps to Asp-319 to Arg-386. The segment at Val-457–Leu-540 is disordered. Over residues Thr-461–Ile-489 the composition is skewed to pro residues. Over residues Asp-512–Ser-522 the composition is skewed to basic and acidic residues. A compositionally biased stretch (polar residues) spans Ala-523–Leu-540.

The protein belongs to the NusA family. As to quaternary structure, monomer. Binds directly to the core enzyme of the DNA-dependent RNA polymerase and to nascent RNA.

Its subcellular location is the cytoplasm. Functionally, participates in both transcription termination and antitermination. In Mycoplasma pneumoniae (strain ATCC 29342 / M129 / Subtype 1) (Mycoplasmoides pneumoniae), this protein is Transcription termination/antitermination protein NusA.